Here is a 136-residue protein sequence, read N- to C-terminus: Ribosome-binding factor A (136 aa).

Belongs to the RbfA family. As to quaternary structure, monomer. Binds 30S ribosomal subunits, but not 50S ribosomal subunits or 70S ribosomes.

Its subcellular location is the cytoplasm. One of several proteins that assist in the late maturation steps of the functional core of the 30S ribosomal subunit. Associates with free 30S ribosomal subunits (but not with 30S subunits that are part of 70S ribosomes or polysomes). Required for efficient processing of 16S rRNA. May interact with the 5'-terminal helix region of 16S rRNA. This is Ribosome-binding factor A from Yersinia enterocolitica serotype O:8 / biotype 1B (strain NCTC 13174 / 8081).